We begin with the raw amino-acid sequence, 70 residues long: uncharacterized protein (70 aa).

The chain crosses the membrane as a helical span at residues 14-34 (CLVVWFACVYSLLILVVLLLI).

It is found in the virion membrane. This is an uncharacterized protein from Homo sapiens (Human).